The chain runs to 332 residues: Ribosomal RNA-processing protein 8 (332 aa).

Residues 1 to 109 (MGKKRINEVS…EVEKKNEEGD (109 aa)) form a disordered region. Composition is skewed to basic residues over residues 38-53 (KKKK…KLAA) and 82-94 (KKKK…KKKY). Residues 95 to 109 (KPEAAEVEKKNEEGD) show a composition bias toward basic and acidic residues. S-adenosyl-L-methionine-binding residues include His158, Gly193, Asp213, Asp225, Met226, and Cys242.

This sequence belongs to the methyltransferase superfamily. RRP8 family.

The protein localises to the nucleus. It is found in the nucleolus. In terms of biological role, probable methyltransferase required to silence rDNA. The chain is Ribosomal RNA-processing protein 8 (rrp-8) from Caenorhabditis briggsae.